Consider the following 43-residue polypeptide: SPbeta prophage-derived uncharacterized protein YotD (43 aa).

In Bacillus subtilis (strain 168), this protein is SPbeta prophage-derived uncharacterized protein YotD (yotD).